A 306-amino-acid polypeptide reads, in one-letter code: Palmitoyl-protein thioesterase ABHD10, mitochondrial (306 aa).

A mitochondrion-targeting transit peptide spans 1–52 (MAVARLAAVAAWVPCRSWGWAAVPFGPHRGLSVLLARIPQRAPRWLPACRQK). An AB hydrolase-1 domain is found at 78–178 (IIFIPGYLSY…VVALIGVATA (101 aa)). Active-site charge relay system residues include serine 152, aspartate 249, and histidine 279.

It belongs to the AB hydrolase superfamily.

It is found in the mitochondrion. The enzyme catalyses S-hexadecanoyl-L-cysteinyl-[protein] + H2O = L-cysteinyl-[protein] + hexadecanoate + H(+). The catalysed reaction is mycophenolic acid O-acyl-beta-D-glucuronide + H2O = mycophenolate + D-glucuronate + H(+). Inhibited by palmostatin-B. Functionally, acts as an acyl-protein thioesterase that hydrolyzes fatty acids from acylated residues in proteins. Regulates the mitochondrial S-depalmitoylation of the nucleophilic active site residue of peroxiredoxin-5/PRDX5, a key antioxidant protein, therefore modulating mitochondrial antioxidant ability. Also catalyzes the deglucuronidation of mycophenolic acid acyl-glucuronide, an active metabolite of the immunosuppressant drug mycophenolate. This is Palmitoyl-protein thioesterase ABHD10, mitochondrial from Homo sapiens (Human).